Here is a 187-residue protein sequence, read N- to C-terminus: UPF0232 protein Mb0004 (187 aa).

Composition is skewed to basic and acidic residues over residues 1 to 17 (MTGSVDRPDQNRGERLM) and 35 to 45 (AARARGQDAGR). Disordered stretches follow at residues 1–23 (MTGSVDRPDQNRGERLMKSPGLD), 35–75 (AARA…DPQP), and 168–187 (PSWRKGPRHIAGRGPRDTYG).

Belongs to the UPF0232 family.

In Mycobacterium bovis (strain ATCC BAA-935 / AF2122/97), this protein is UPF0232 protein Mb0004.